The sequence spans 89 residues: HssA/B-like protein 10 (89 aa).

Belongs to the hssA/B family.

The sequence is that of HssA/B-like protein 10 (hssl10) from Dictyostelium discoideum (Social amoeba).